The sequence spans 346 residues: NADP-dependent alcohol dehydrogenase C (346 aa).

7 residues coordinate Zn(2+): Cys41, His63, Cys94, Cys97, Cys100, Cys108, and Cys158.

The protein belongs to the zinc-containing alcohol dehydrogenase family. Zn(2+) is required as a cofactor.

It catalyses the reaction a primary alcohol + NADP(+) = an aldehyde + NADPH + H(+). This is NADP-dependent alcohol dehydrogenase C (adhC) from Mycobacterium bovis (strain ATCC BAA-935 / AF2122/97).